Consider the following 290-residue polypeptide: Lipid phosphate phosphatase 2 (290 aa).

The next 3 helical transmembrane spans lie at 26–46 (WLILLLLIVIEIVLNVIEPFH), 69–89 (WAVPLIAVVLPFAVICVYYFI), and 93–113 (VYDLHHAILGLLFSVLITGVI). N-linked (GlcNAc...) asparagine glycosylation occurs at Asn-142. A run of 3 helical transmembrane segments spans residues 162-182 (SFPSGHTSWSFAGLGFLSLYL), 193-213 (GHVAKLCIVILPLLVAALVGV), and 226-246 (VFGGAIIGLTVATFCYLQFFP).

This sequence belongs to the PA-phosphatase related phosphoesterase family. As to expression, expressed in roots, stems, leaves, buds, flowers and siliques.

The protein resides in the membrane. PA phosphatase activity not inhibited by N-ethylmaleimide. In terms of biological role, may play a general 'housekeeping role' in lipid metabolism. Exhibits both diacylglycerol pyrophosphate (DGPP) phosphatase and phosphatidate (PA) phosphatase activities with no preference for either substrate. May play a role downstream of the ABA signaling pathway during seed germination and in stomatal movement in leaves. This chain is Lipid phosphate phosphatase 2 (LPP2), found in Arabidopsis thaliana (Mouse-ear cress).